The sequence spans 741 residues: Photosystem I P700 chlorophyll a apoprotein A2 1 (741 aa).

The next 8 membrane-spanning stretches (helical) occupy residues isoleucine 46–alanine 69, leucine 135–glutamine 158, leucine 175–isoleucine 199, methionine 273–tyrosine 291, leucine 334–tyrosine 357, alanine 373–valine 399, alanine 421–histidine 443, and phenylalanine 524–valine 542. The [4Fe-4S] cluster site is built by cysteine 566 and cysteine 575. 2 helical membrane passes run serine 582 to tryptophan 603 and leucine 650 to isoleucine 672. Residues histidine 661, methionine 669, and tyrosine 677 each coordinate chlorophyll a. Tryptophan 678 serves as a coordination point for phylloquinone. Residues valine 714–alanine 734 form a helical membrane-spanning segment.

The protein belongs to the PsaA/PsaB family. In terms of assembly, the PsaA/B heterodimer binds the P700 chlorophyll special pair and subsequent electron acceptors. PSI consists of a core antenna complex that captures photons, and an electron transfer chain that converts photonic excitation into a charge separation. The cyanobacterial PSI reaction center is composed of one copy each of PsaA,B,C,D,E,F,I,J,K,L,M and X, and forms trimeric complexes. Requires PSI electron transfer chain: 5 chlorophyll a, 1 chlorophyll a', 2 phylloquinones and 3 4Fe-4S clusters. PSI core antenna: 90 chlorophyll a, 22 carotenoids, 3 phospholipids and 1 galactolipid. P700 is a chlorophyll a/chlorophyll a' dimer, A0 is one or more chlorophyll a, A1 is one or both phylloquinones and FX is a shared 4Fe-4S iron-sulfur center. as cofactor.

The protein resides in the cellular thylakoid membrane. It carries out the reaction reduced [plastocyanin] + hnu + oxidized [2Fe-2S]-[ferredoxin] = oxidized [plastocyanin] + reduced [2Fe-2S]-[ferredoxin]. PsaA and PsaB bind P700, the primary electron donor of photosystem I (PSI), as well as the electron acceptors A0, A1 and FX. PSI is a plastocyanin/cytochrome c6-ferredoxin oxidoreductase, converting photonic excitation into a charge separation, which transfers an electron from the donor P700 chlorophyll pair to the spectroscopically characterized acceptors A0, A1, FX, FA and FB in turn. Oxidized P700 is reduced on the lumenal side of the thylakoid membrane by plastocyanin or cytochrome c6. This is Photosystem I P700 chlorophyll a apoprotein A2 1 (psaB1) from Nostoc sp. (strain PCC 7120 / SAG 25.82 / UTEX 2576).